The sequence spans 247 residues: ATP synthase subunit a, chloroplastic (247 aa).

A run of 5 helical transmembrane segments spans residues 38–58 (QVLITSWVVIAILLGSATIAV), 95–115 (VPFIGTMFLFIFVSNWSGALL), 134–154 (INTTVALALPTSMAYFYAGFT), 199–219 (LVVVVLVSLVPSVVPIPVMFL), and 220–240 (GLFTSGIQALIFATLAAAYIG).

Belongs to the ATPase A chain family. As to quaternary structure, F-type ATPases have 2 components, CF(1) - the catalytic core - and CF(0) - the membrane proton channel. CF(1) has five subunits: alpha(3), beta(3), gamma(1), delta(1), epsilon(1). CF(0) has four main subunits: a, b, b' and c.

It localises to the plastid. It is found in the chloroplast thylakoid membrane. Its function is as follows. Key component of the proton channel; it plays a direct role in the translocation of protons across the membrane. In Liriodendron tulipifera (Tuliptree), this protein is ATP synthase subunit a, chloroplastic.